The sequence spans 298 residues: DDRGK domain-containing protein 1 (298 aa).

At 1–2 (ME) the chain is on the lumenal side. Residues 3 to 23 (EIFALIVSMILIVAVIPLFFW) form a helical membrane-spanning segment. Over 24 to 298 (KRRRDARSRE…ISGMEEISVS (275 aa)) the chain is Cytoplasmic. Residues 31 to 155 (SREEVAEPPQ…EEEKARQAKE (125 aa)) are disordered. Basic and acidic residues predominate over residues 101–155 (KRQEREAQRQAEEATRESRNTKQDWYAEMRRKKDEEREAEELKLEEEEKARQAKE).

Belongs to the DDRGK1 family.

It is found in the endoplasmic reticulum membrane. Substrate adapter for ufmylation, the covalent attachment of the ubiquitin-like modifier UFM1 to substrate proteins. This Arabidopsis thaliana (Mouse-ear cress) protein is DDRGK domain-containing protein 1.